The sequence spans 516 residues: D-alanine--D-alanyl carrier protein ligase (516 aa).

An ATP-binding site is contributed by 156–157 (TS). Asp203 contributes to the D-alanine binding site. Residue 298 to 303 (NAYGPT) participates in ATP binding. Val307 is a D-alanine binding site. ATP-binding positions include Asp389, 401–404 (YGGR), and Lys503. Residue Lys503 coordinates D-alanine.

The protein belongs to the ATP-dependent AMP-binding enzyme family. DltA subfamily.

The protein localises to the cytoplasm. The enzyme catalyses holo-[D-alanyl-carrier protein] + D-alanine + ATP = D-alanyl-[D-alanyl-carrier protein] + AMP + diphosphate. It participates in cell wall biogenesis; lipoteichoic acid biosynthesis. Catalyzes the first step in the D-alanylation of lipoteichoic acid (LTA), the activation of D-alanine and its transfer onto the D-alanyl carrier protein (Dcp) DltC. In an ATP-dependent two-step reaction, forms a high energy D-alanyl-AMP intermediate, followed by transfer of the D-alanyl residue as a thiol ester to the phosphopantheinyl prosthetic group of the Dcp. D-alanylation of LTA plays an important role in modulating the properties of the cell wall in Gram-positive bacteria, influencing the net charge of the cell wall. This chain is D-alanine--D-alanyl carrier protein ligase, found in Streptococcus pneumoniae serotype 4 (strain ATCC BAA-334 / TIGR4).